The primary structure comprises 262 residues: Indole-3-glycerol phosphate synthase (262 aa).

The protein belongs to the TrpC family.

It carries out the reaction 1-(2-carboxyphenylamino)-1-deoxy-D-ribulose 5-phosphate + H(+) = (1S,2R)-1-C-(indol-3-yl)glycerol 3-phosphate + CO2 + H2O. The protein operates within amino-acid biosynthesis; L-tryptophan biosynthesis; L-tryptophan from chorismate: step 4/5. In Staphylococcus epidermidis (strain ATCC 35984 / DSM 28319 / BCRC 17069 / CCUG 31568 / BM 3577 / RP62A), this protein is Indole-3-glycerol phosphate synthase.